The primary structure comprises 577 residues: Arginine--tRNA ligase (577 aa).

The 'HIGH' region motif lies at 122 to 132; it reads PNVAKEMHVGH.

This sequence belongs to the class-I aminoacyl-tRNA synthetase family. As to quaternary structure, monomer.

It localises to the cytoplasm. The enzyme catalyses tRNA(Arg) + L-arginine + ATP = L-arginyl-tRNA(Arg) + AMP + diphosphate. This chain is Arginine--tRNA ligase, found in Escherichia coli O1:K1 / APEC.